Consider the following 512-residue polypeptide: Tabersonine 16-hydroxylase 2 (512 aa).

Met-1 is a topological domain (lumenal). Residues 2–22 traverse the membrane as a helical segment; that stretch reads ELYYFSTFAFLLFCFILAKTL. Over 23–512 the chain is Cytoplasmic; sequence KKSGQSNLKL…YSASSLKGKY (490 aa). Cys-445 is a heme binding site.

It belongs to the cytochrome P450 family. It depends on heme as a cofactor. In terms of tissue distribution, expressed at low levels in roots, fruits, stems, flower buds and flowers, but highly expressed in young leaves. Detected in adaxial and abaxial epidermis cells.

It localises to the endoplasmic reticulum membrane. The catalysed reaction is (-)-tabersonine + reduced [NADPH--hemoprotein reductase] + O2 = 16-hydroxytabersonine + oxidized [NADPH--hemoprotein reductase] + H2O + H(+). Functionally, involved in the foliar biosynthesis of vindoline, a precursor of vinblastine and vincristine. Hydroxylates specifically tabersonine, 2,3-dihydrotabersonine and 2,3-dihydro-3-hydroxytabersonine, but has no activity with naringenin, tryptamine, secologanin, strictosidine, ajmalicine, vindoline and catharanthine. In Catharanthus roseus (Madagascar periwinkle), this protein is Tabersonine 16-hydroxylase 2.